A 391-amino-acid polypeptide reads, in one-letter code: Alanine racemase (391 aa).

The Proton acceptor; specific for D-alanine role is filled by lysine 46. Position 46 is an N6-(pyridoxal phosphate)lysine (lysine 46). Arginine 148 contacts substrate. Tyrosine 283 acts as the Proton acceptor; specific for L-alanine in catalysis. Substrate is bound at residue methionine 331.

The protein belongs to the alanine racemase family. Pyridoxal 5'-phosphate serves as cofactor.

It carries out the reaction L-alanine = D-alanine. The protein operates within amino-acid biosynthesis; D-alanine biosynthesis; D-alanine from L-alanine: step 1/1. Its function is as follows. Catalyzes the interconversion of L-alanine and D-alanine. May also act on other amino acids. This chain is Alanine racemase (alr), found in Streptomyces coelicolor (strain ATCC BAA-471 / A3(2) / M145).